Here is a 167-residue protein sequence, read N- to C-terminus: Protein-export protein SecB (167 aa).

Belongs to the SecB family. Homotetramer, a dimer of dimers. One homotetramer interacts with 1 SecA dimer.

The protein localises to the cytoplasm. Functionally, one of the proteins required for the normal export of preproteins out of the cell cytoplasm. It is a molecular chaperone that binds to a subset of precursor proteins, maintaining them in a translocation-competent state. It also specifically binds to its receptor SecA. This Cellvibrio japonicus (strain Ueda107) (Pseudomonas fluorescens subsp. cellulosa) protein is Protein-export protein SecB.